The primary structure comprises 197 residues: Adenylate kinase isoenzyme 6 homolog FAP7 (197 aa).

Gly-17, Gly-19, Lys-20, Ser-21, and Ser-22 together coordinate ATP. The segment at 38-61 (NISDFAKDNDCFEGYDEGRKSHIV) is NMPbind. Residues 113 to 123 (ARGYHDSKIEE) form an LID region. Arg-114 provides a ligand contact to ATP. A disordered region spans residues 176–197 (PDGVTNEYQGPRSDDEDDEDSE). Tyr-183 bears the Phosphotyrosine mark. Phosphoserine occurs at positions 188 and 196.

The protein belongs to the adenylate kinase family. AK6 subfamily. As to quaternary structure, interacts with small ribosomal subunit protein uS11B/RPS14B. Not a structural component of 43S pre-ribosomes, but transiently interacts with them by binding to uS11/RPS14.

The protein resides in the cytoplasm. The protein localises to the nucleus. It carries out the reaction AMP + ATP = 2 ADP. The enzyme catalyses ATP + H2O = ADP + phosphate + H(+). Its function is as follows. Broad-specificity nucleoside monophosphate (NMP) kinase that catalyzes the reversible transfer of the terminal phosphate group between nucleoside triphosphates and monophosphates. Also has ATPase activity. Involved in the late cytoplasmic maturation steps of the 40S ribosomal particles, specifically 18S rRNA maturation. Required for cleavage of the 20S pre-rRNA at site D in the cytoplasm. While NMP activity is not required for ribosome maturation, ATPase activity is. Associates transiently with small ribosomal subunit protein uS11. ATP hydrolysis breaks the interaction with uS11. May temporarily remove uS11 from the ribosome to enable a conformational change of the ribosomal RNA that is needed for the final maturation step of the small ribosomal subunit. Promotes formation of the rotated state in 80S-like ribosomes, a key intermediate in translocation, thereby releasing the essential assembly factor DIM1 from pre-40S subunits. Its NMP activity may have a role in nuclear energy homeostasis. Involved in oxidative stress response. Required for POS9-dependent target gene transcription upon oxidative stress. The protein is Adenylate kinase isoenzyme 6 homolog FAP7 of Saccharomyces cerevisiae (strain ATCC 204508 / S288c) (Baker's yeast).